The chain runs to 291 residues: Pre-mRNA-splicing factor SPP381 (291 aa).

2 disordered regions span residues methionine 1–arginine 99 and glutamate 239–threonine 266. Composition is skewed to polar residues over residues glutamine 28–histidine 41 and threonine 52–glutamine 62. The span at glutamate 63 to serine 91 shows a compositional bias: acidic residues. Positions glutamate 239–histidine 258 are enriched in basic and acidic residues.

Belongs to the SPP381 family. Component of the U4/U6-U5 tri-snRNP complex composed of the U4, U6 and U5 snRNAs and at least PRP3, PRP4, PRP6, PRP8, PRP18, PRP31, PRP38, SNU13, SNU23, SNU66, SNU114, SPP381, SMB1, SMD1, SMD2, SMD3, SMX2, SMX3, LSM2, LSM3, LSM4, LSM5, LSM6, LSM7, LSM8, BRR2 and DIB1. Interacts with PRP38.

Its subcellular location is the nucleus. Component of the spliceosome and rRNA processing machinery. In association with the spliceosomal U4/U6.U5 tri-snRNP particle, required for splicing of pre-mRNA. The protein is Pre-mRNA-splicing factor SPP381 (SPP381) of Saccharomyces cerevisiae (strain ATCC 204508 / S288c) (Baker's yeast).